The chain runs to 616 residues: Hemagglutinin-neuraminidase (616 aa).

Topologically, residues 1-26 (MDRAVSQVALENDEREAKNTWRLVFR) are intravirion. The helical transmembrane segment at 27–47 (IAILLLTVVTLAISAAALAYS) threads the bilayer. The Virion surface portion of the chain corresponds to 48–616 (MEASTPSDLV…ELESYAASWP (569 aa)). N-linked (GlcNAc...) asparagine; by host glycosylation is present at N119. An important for interaction with fusion/F protein region spans residues 124-152 (GAPIHDPDYIGGIGKELIVDDASDVTSFY). Cystine bridges form between C172–C196, C186–C247, and C238–C251. Residues 234 to 239 (NRKSCS) are involved in neuraminidase activity. N341 and N433 each carry an N-linked (GlcNAc...) asparagine; by host glycan. 2 disulfide bridges follow: C344–C461 and C455–C465. Residues N481, N538, and N600 are each glycosylated (N-linked (GlcNAc...) asparagine; by host). C531 and C542 are disulfide-bonded.

Belongs to the paramyxoviruses hemagglutinin-neuraminidase family. Homotetramer; composed of disulfide-linked homodimers. Interacts with F protein trimer. Interacts with host CG-1B; this interaction inhibits viral adsorption and replication rather than internalization.

The protein resides in the virion membrane. The protein localises to the host cell membrane. It carries out the reaction Hydrolysis of alpha-(2-&gt;3)-, alpha-(2-&gt;6)-, alpha-(2-&gt;8)- glycosidic linkages of terminal sialic acid residues in oligosaccharides, glycoproteins, glycolipids, colominic acid and synthetic substrates.. In terms of biological role, mediates the viral entry into the host cell together with fusion/F protein. Attaches the virus to sialic acid-containing cell receptors and thereby initiates infection. Binding of HN protein to the receptor induces a conformational change that allows the F protein to trigger virion/cell membranes fusion. Neuraminidase activity ensures the efficient spread of the virus by dissociating the mature virions from the neuraminic acid containing glycoproteins. This Gallus gallus (Chicken) protein is Hemagglutinin-neuraminidase (HN).